We begin with the raw amino-acid sequence, 356 residues long: MSFKNFKVVEKMIFGRGSFVQLDDVLAAQRKADDDFVVFLVDDVHQGKPLEARIPVKAQDLLIWVNVDEEPSTIQIDALTEQVQAFNGKLPVSVVGLGGGSTMDVAKAVSLMLTNPGGSAMYQGWDLIKKPAVHHIGIPTISGTGAEASRTAVLCGPVRKLGLNSDYTVFDQIIMDSELIDGVETDQWFYTGMDCYIHCVESLEGTFLNEFSKAYAEKAMDLCRQVYLEDHPEKDDKLMMASFMGGMSIAYSQVGACHAVSYGLSYILGYHHGIGNCIAFDVLEEFYPEGVAEFRLMMKKHNITLPKNICKDLPDETIAKMVAVTKSMGPLWANVYGPTWEEKVTDEMLTALFRRI.

The protein belongs to the iron-containing alcohol dehydrogenase family. A divalent metal cation is required as a cofactor.

It catalyses the reaction 3-deoxy-alpha-D-manno-oct-2-ulosonate + O2 = 3,8-dideoxy-8-oxo-alpha-D-manno-octulosonate + H2O2. It functions in the pathway bacterial outer membrane biogenesis; lipopolysaccharide biosynthesis. Its activity is regulated as follows. Inhibited by EDTA. Functionally, catalyzes the first step of the biosynthesis of Kdo8N (8-amino-3,8-dideoxy-D-manno-octulosonate) from Kdo (3-deoxy-D-manno-octulosonate). The polypeptide is 3-deoxy-alpha-D-manno-octulosonate 8-oxidase (Shewanella oneidensis (strain ATCC 700550 / JCM 31522 / CIP 106686 / LMG 19005 / NCIMB 14063 / MR-1)).